The following is a 233-amino-acid chain: 3-dehydroquinate dehydratase (233 aa).

3-dehydroquinate is bound by residues Glu-34–Arg-36 and Arg-64. The Proton donor/acceptor role is filled by His-118. The active-site Schiff-base intermediate with substrate is the Lys-145. Residues Arg-185, Ser-205, and Gln-209 each coordinate 3-dehydroquinate.

This sequence belongs to the type-I 3-dehydroquinase family. In terms of assembly, homodimer.

It catalyses the reaction 3-dehydroquinate = 3-dehydroshikimate + H2O. It functions in the pathway metabolic intermediate biosynthesis; chorismate biosynthesis; chorismate from D-erythrose 4-phosphate and phosphoenolpyruvate: step 3/7. Functionally, involved in the third step of the chorismate pathway, which leads to the biosynthesis of aromatic amino acids. Catalyzes the cis-dehydration of 3-dehydroquinate (DHQ) and introduces the first double bond of the aromatic ring to yield 3-dehydroshikimate. This chain is 3-dehydroquinate dehydratase, found in Coxiella burnetii (strain CbuK_Q154) (Coxiella burnetii (strain Q154)).